Here is a 207-residue protein sequence, read N- to C-terminus: Charged multivesicular body protein 3 (207 aa).

The disordered stretch occupies residues 174–207; sequence QVSSAPLETHQQEEVVQEKQEDSELLDRLKALKS. A coiled-coil region spans residues 183-207; sequence HQQEEVVQEKQEDSELLDRLKALKS. The segment covering 183–207 has biased composition (basic and acidic residues); sequence HQQEEVVQEKQEDSELLDRLKALKS.

Belongs to the SNF7 family. As to quaternary structure, probable core component of the endosomal sorting required for transport complex III (ESCRT-III).

It localises to the endosome membrane. Functionally, probable core component of the endosomal sorting required for transport complex III (ESCRT-III) which is involved in multivesicular bodies (MVBs) formation and sorting of endosomal cargo proteins into MVBs. MVBs contain intraluminal vesicles (ILVs) that are generated by invagination and scission from the limiting membrane of the endosome and are delivered to lysosomes enabling degradation of membrane proteins. The protein is Charged multivesicular body protein 3 (chmp3) of Dictyostelium discoideum (Social amoeba).